The primary structure comprises 534 residues: CTP synthase (534 aa).

Residues M1–L265 are amidoligase domain. S12 provides a ligand contact to CTP. S12 is a UTP binding site. G13–I18 serves as a coordination point for ATP. L-glutamine is bound at residue Y53. D70 is a binding site for ATP. Mg(2+)-binding residues include D70 and E140. Residues D147–E149, K186–Q191, and K222 contribute to the CTP site. Residues K186–Q191 and K222 contribute to the UTP site. The Glutamine amidotransferase type-1 domain maps to K289 to E530. G352 lines the L-glutamine pocket. Residue C379 is the Nucleophile; for glutamine hydrolysis of the active site. Residues L380–Q383, E403, and R460 each bind L-glutamine. Catalysis depends on residues H503 and E505.

It belongs to the CTP synthase family. As to quaternary structure, homotetramer.

The catalysed reaction is UTP + L-glutamine + ATP + H2O = CTP + L-glutamate + ADP + phosphate + 2 H(+). It carries out the reaction L-glutamine + H2O = L-glutamate + NH4(+). The enzyme catalyses UTP + NH4(+) + ATP = CTP + ADP + phosphate + 2 H(+). The protein operates within pyrimidine metabolism; CTP biosynthesis via de novo pathway; CTP from UDP: step 2/2. With respect to regulation, allosterically activated by GTP, when glutamine is the substrate; GTP has no effect on the reaction when ammonia is the substrate. The allosteric effector GTP functions by stabilizing the protein conformation that binds the tetrahedral intermediate(s) formed during glutamine hydrolysis. Inhibited by the product CTP, via allosteric rather than competitive inhibition. In terms of biological role, catalyzes the ATP-dependent amination of UTP to CTP with either L-glutamine or ammonia as the source of nitrogen. Regulates intracellular CTP levels through interactions with the four ribonucleotide triphosphates. The chain is CTP synthase from Methanosarcina acetivorans (strain ATCC 35395 / DSM 2834 / JCM 12185 / C2A).